The sequence spans 438 residues: MNVGFISLGCSKNLVVTEEIIGLFKSNHFNIVNKKEDAEIIVINTCGFIESAKQEAINTILEMAKLKNNKCKYLIVAGCLVQRYKKELEKAIPEVDLFISISEYKQIWKEIENLLDLETGKESNLDYHNRVLTTGSNMAYLKIGEGCDNHCTYCAIPNIQGPYISRTMEDILKEARNLAKQGIKELIVIAQDTTKYGLDIYGEARLPQLLEELCKIEDIEWVRFLYVYPESITDELIKVVGENDKICNYFDIPIQHISDSVLKRMNRKSDGASVRNIIEKIRREIPDVIIRTTLIVGFPGETEEDFKELYEFVEETKFDKLGVFAYSKEDNTPAAKLKEQIHHATKKSRLRKIMALQEKISRESLEQKVGNVYKVLIESRTKGGNYYIGRTYMDVPDMDGVVYIVNNTKENLMNTFVDCRIQRAKDYDLFGELYTEGK.

An MTTase N-terminal domain is found at 1-116 (MNVGFISLGC…IWKEIENLLD (116 aa)). [4Fe-4S] cluster is bound by residues C10, C46, C79, C147, C151, and C154. The region spanning 133–363 (TTGSNMAYLK…MALQEKISRE (231 aa)) is the Radical SAM core domain. One can recognise a TRAM domain in the interval 366–435 (EQKVGNVYKV…DYDLFGELYT (70 aa)).

The protein belongs to the methylthiotransferase family. RimO subfamily. It depends on [4Fe-4S] cluster as a cofactor.

The protein resides in the cytoplasm. It carries out the reaction L-aspartate(89)-[ribosomal protein uS12]-hydrogen + (sulfur carrier)-SH + AH2 + 2 S-adenosyl-L-methionine = 3-methylsulfanyl-L-aspartate(89)-[ribosomal protein uS12]-hydrogen + (sulfur carrier)-H + 5'-deoxyadenosine + L-methionine + A + S-adenosyl-L-homocysteine + 2 H(+). Its function is as follows. Catalyzes the methylthiolation of an aspartic acid residue of ribosomal protein uS12. This is Ribosomal protein uS12 methylthiotransferase RimO from Alkaliphilus oremlandii (strain OhILAs) (Clostridium oremlandii (strain OhILAs)).